The chain runs to 466 residues: Trigger factor (466 aa).

The PPIase FKBP-type domain occupies 162–243; the sequence is GDVVSIDLSA…VRSVKERELP (82 aa). Residues 428–466 form a disordered region; it reads GNTIDTSEFFGKRVSAGEAEEAEPADEGAARAASDEATT. Low complexity predominate over residues 457-466; it reads ARAASDEATT.

This sequence belongs to the FKBP-type PPIase family. Tig subfamily.

It localises to the cytoplasm. The enzyme catalyses [protein]-peptidylproline (omega=180) = [protein]-peptidylproline (omega=0). Functionally, involved in protein export. Acts as a chaperone by maintaining the newly synthesized protein in an open conformation. Functions as a peptidyl-prolyl cis-trans isomerase. This Mycobacterium bovis (strain BCG / Tokyo 172 / ATCC 35737 / TMC 1019) protein is Trigger factor.